An 802-amino-acid polypeptide reads, in one-letter code: Oligophrenin-1 (802 aa).

Residues 265–368 (QPTIEGYLYT…WMEAMDGKEP (104 aa)) enclose the PH domain. A Rho-GAP domain is found at 380–564 (MELNEVGFKF…ILIEHFGKIY (185 aa)). Disordered regions lie at residues 569–588 (EESA…RHKP), 607–666 (LDES…EPCP), 680–770 (GGTK…NAGE), and 783–802 (FETA…GDES). Over residues 616–627 (HQTPNGTITSSI) the composition is skewed to polar residues. Over residues 716 to 732 (HHKEGDADSFSKVRPPG) the composition is skewed to basic and acidic residues.

As to quaternary structure, interacts with HOMER1. Interacts with AMPA receptor complexes. Interacts with SH3GL2 (endophilin-A1). Interacts (via C-terminus) with NR1D1. Expressed in brain.

The protein resides in the postsynapse. Its subcellular location is the presynapse. The protein localises to the cell projection. It localises to the axon. It is found in the dendritic spine. The protein resides in the dendrite. Its subcellular location is the cytoplasm. Functionally, stimulates GTP hydrolysis of members of the Rho family. Its action on RHOA activity and signaling is implicated in growth and stabilization of dendritic spines, and therefore in synaptic function. Critical for the stabilization of AMPA receptors at postsynaptic sites. Critical for the regulation of synaptic vesicle endocytosis at presynaptic terminals. Required for the localization of NR1D1 to dendrites, can suppress its repressor activity and protect it from proteasomal degradation. The chain is Oligophrenin-1 (OPHN1) from Homo sapiens (Human).